The primary structure comprises 338 residues: GTPase Obg (338 aa).

In terms of domain architecture, Obg spans 1–159 (MSFIDEVKIN…RWIRMELKLM (159 aa)). Residues 58 to 79 (DLRQHPHQKAGRGKNGMGSDRH) form a disordered region. Residues 160-331 (ADVGLLGMPS…LLDDIAFNLW (172 aa)) form the OBG-type G domain. GTP contacts are provided by residues 166–173 (GMPSVGKS), 191–195 (FTTLK), 213–216 (DIPG), 283–286 (NKID), and 312–314 (SAA). Residues Ser173 and Thr193 each coordinate Mg(2+).

The protein belongs to the TRAFAC class OBG-HflX-like GTPase superfamily. OBG GTPase family. As to quaternary structure, monomer. Mg(2+) serves as cofactor.

The protein localises to the cytoplasm. Functionally, an essential GTPase which binds GTP, GDP and possibly (p)ppGpp with moderate affinity, with high nucleotide exchange rates and a fairly low GTP hydrolysis rate. Plays a role in control of the cell cycle, stress response, ribosome biogenesis and in those bacteria that undergo differentiation, in morphogenesis control. In Citrifermentans bemidjiense (strain ATCC BAA-1014 / DSM 16622 / JCM 12645 / Bem) (Geobacter bemidjiensis), this protein is GTPase Obg.